A 100-amino-acid chain; its full sequence is UPF0213 protein CKO_04549 (100 aa).

A GIY-YIG domain is found at 2–77 (TPWYLYLIRT…KRLTKRQKER (76 aa)).

This sequence belongs to the UPF0213 family.

This chain is UPF0213 protein CKO_04549, found in Citrobacter koseri (strain ATCC BAA-895 / CDC 4225-83 / SGSC4696).